We begin with the raw amino-acid sequence, 389 residues long: Succinyl-diaminopimelate desuccinylase (389 aa).

Residue histidine 72 coordinates Zn(2+). Aspartate 74 is an active-site residue. Aspartate 105 serves as a coordination point for Zn(2+). Catalysis depends on glutamate 144, which acts as the Proton acceptor. 3 residues coordinate Zn(2+): glutamate 145, glutamate 173, and histidine 362.

The protein belongs to the peptidase M20A family. DapE subfamily. In terms of assembly, homodimer. The cofactor is Zn(2+). It depends on Co(2+) as a cofactor.

It carries out the reaction N-succinyl-(2S,6S)-2,6-diaminopimelate + H2O = (2S,6S)-2,6-diaminopimelate + succinate. It participates in amino-acid biosynthesis; L-lysine biosynthesis via DAP pathway; LL-2,6-diaminopimelate from (S)-tetrahydrodipicolinate (succinylase route): step 3/3. In terms of biological role, catalyzes the hydrolysis of N-succinyl-L,L-diaminopimelic acid (SDAP), forming succinate and LL-2,6-diaminopimelate (DAP), an intermediate involved in the bacterial biosynthesis of lysine and meso-diaminopimelic acid, an essential component of bacterial cell walls. The polypeptide is Succinyl-diaminopimelate desuccinylase (Nitrobacter hamburgensis (strain DSM 10229 / NCIMB 13809 / X14)).